The following is a 522-amino-acid chain: Protein nucleotidyltransferase YdiU (522 aa).

Gly101, Gly103, Arg104, Lys123, Asp135, Gly136, Arg193, and Arg200 together coordinate ATP. The active-site Proton acceptor is the Asp270. The Mg(2+) site is built by Asn271 and Asp280. Residue Asp280 coordinates ATP.

Belongs to the SELO family. Mg(2+) is required as a cofactor. Requires Mn(2+) as cofactor.

The catalysed reaction is L-seryl-[protein] + ATP = 3-O-(5'-adenylyl)-L-seryl-[protein] + diphosphate. The enzyme catalyses L-threonyl-[protein] + ATP = 3-O-(5'-adenylyl)-L-threonyl-[protein] + diphosphate. It catalyses the reaction L-tyrosyl-[protein] + ATP = O-(5'-adenylyl)-L-tyrosyl-[protein] + diphosphate. It carries out the reaction L-histidyl-[protein] + UTP = N(tele)-(5'-uridylyl)-L-histidyl-[protein] + diphosphate. The catalysed reaction is L-seryl-[protein] + UTP = O-(5'-uridylyl)-L-seryl-[protein] + diphosphate. The enzyme catalyses L-tyrosyl-[protein] + UTP = O-(5'-uridylyl)-L-tyrosyl-[protein] + diphosphate. Functionally, nucleotidyltransferase involved in the post-translational modification of proteins. It can catalyze the addition of adenosine monophosphate (AMP) or uridine monophosphate (UMP) to a protein, resulting in modifications known as AMPylation and UMPylation. The polypeptide is Protein nucleotidyltransferase YdiU (Flavobacterium johnsoniae (strain ATCC 17061 / DSM 2064 / JCM 8514 / BCRC 14874 / CCUG 350202 / NBRC 14942 / NCIMB 11054 / UW101) (Cytophaga johnsonae)).